A 296-amino-acid chain; its full sequence is Protein RarD (296 aa).

The Cytoplasmic segment spans residues 1 to 11 (MDAKQTRQGVL). Residues 12 to 34 (LALAAYFIWGIAPAYFKLIYYVP) form a helical membrane-spanning segment. One can recognise an EamA domain in the interval 18–145 (FIWGIAPAYF…AICGVLVQLW (128 aa)). Residues 35–37 (ADE) lie on the Periplasmic side of the membrane. The helical transmembrane segment at 38–60 (ILTHRVIWSFFFMVVLMSICRQW) threads the bilayer. The Cytoplasmic segment spans residues 61-72 (SYLKTLIQTPQK). Residues 73-95 (IFMLAVSAVLIGGNWLLFIWAVN) traverse the membrane as a helical segment. At 96–99 (NHHM) the chain is on the periplasmic side. Residues 100 to 122 (LEASLGYFINPLVNIVLGMIFLG) form a helical membrane-spanning segment. Topologically, residues 123-128 (ERFRRM) are cytoplasmic. The helical transmembrane segment at 129 to 146 (QWLAVILAICGVLVQLWT) threads the bilayer. At 147 to 149 (FGS) the chain is on the periplasmic side. The chain crosses the membrane as a helical span at residues 150–167 (LPIIALGLAFSFAFYGLV). Residues 168-179 (RKKIAVEAQTGM) lie on the Cytoplasmic side of the membrane. A helical membrane pass occupies residues 180–197 (LIETMWLLPVAAIYLFAI). At 198-211 (ADSSTSHMGQNPMS) the chain is on the periplasmic side. The helical transmembrane segment at 212–234 (LNLLLIAAGIVTTVPLLCFTAAA) threads the bilayer. The Cytoplasmic portion of the chain corresponds to 235 to 238 (TRLR). The chain crosses the membrane as a helical span at residues 239–261 (LSTLGFFQYIGPTLMFLLAVTFY). Topologically, residues 262-270 (GEKPGADKM) are periplasmic. A helical transmembrane segment spans residues 271–290 (VTFAFIWVALAIFVMDAIYT). Residues 291–296 (QRRTSK) lie on the Cytoplasmic side of the membrane.

Belongs to the EamA transporter family.

It localises to the cell inner membrane. This chain is Protein RarD (rarD), found in Escherichia coli (strain K12).